A 355-amino-acid polypeptide reads, in one-letter code: Phosphoribosylformylglycinamidine cyclo-ligase (355 aa).

This sequence belongs to the AIR synthase family.

The protein resides in the cytoplasm. It carries out the reaction 2-formamido-N(1)-(5-O-phospho-beta-D-ribosyl)acetamidine + ATP = 5-amino-1-(5-phospho-beta-D-ribosyl)imidazole + ADP + phosphate + H(+). It participates in purine metabolism; IMP biosynthesis via de novo pathway; 5-amino-1-(5-phospho-D-ribosyl)imidazole from N(2)-formyl-N(1)-(5-phospho-D-ribosyl)glycinamide: step 2/2. The protein is Phosphoribosylformylglycinamidine cyclo-ligase of Paraburkholderia phytofirmans (strain DSM 17436 / LMG 22146 / PsJN) (Burkholderia phytofirmans).